A 143-amino-acid polypeptide reads, in one-letter code: Transcriptional regulator MraZ (143 aa).

SpoVT-AbrB domains lie at 5–47 (EYLH…PLDE) and 76–119 (ATEC…SQAL).

Belongs to the MraZ family. Forms oligomers.

The protein resides in the cytoplasm. The protein localises to the nucleoid. In Desulfitobacterium hafniense (strain DSM 10664 / DCB-2), this protein is Transcriptional regulator MraZ.